The following is a 373-amino-acid chain: UDP-3-O-acylglucosamine N-acyltransferase 2 (373 aa).

Residue His257 is the Proton acceptor of the active site. Residues 346 to 373 form a disordered region; that stretch reads DGRTAASAEAAAPSSDATGVDQPDQAAS. Low complexity predominate over residues 350–362; that stretch reads AASAEAAAPSSDA.

This sequence belongs to the transferase hexapeptide repeat family. LpxD subfamily. As to quaternary structure, homotrimer.

The catalysed reaction is a UDP-3-O-[(3R)-3-hydroxyacyl]-alpha-D-glucosamine + a (3R)-hydroxyacyl-[ACP] = a UDP-2-N,3-O-bis[(3R)-3-hydroxyacyl]-alpha-D-glucosamine + holo-[ACP] + H(+). It participates in bacterial outer membrane biogenesis; LPS lipid A biosynthesis. In terms of biological role, catalyzes the N-acylation of UDP-3-O-acylglucosamine using 3-hydroxyacyl-ACP as the acyl donor. Is involved in the biosynthesis of lipid A, a phosphorylated glycolipid that anchors the lipopolysaccharide to the outer membrane of the cell. The polypeptide is UDP-3-O-acylglucosamine N-acyltransferase 2 (Rhodopseudomonas palustris (strain BisB18)).